The following is a 287-amino-acid chain: S-methyl-5'-thioadenosine phosphorylase (287 aa).

Residues T13 and 55–56 (RH) each bind phosphate. Residue M186 participates in substrate binding. T187 provides a ligand contact to phosphate. 210-212 (DYD) lines the substrate pocket.

The protein belongs to the PNP/MTAP phosphorylase family. MTAP subfamily. As to quaternary structure, homohexamer. Dimer of a homotrimer.

It carries out the reaction S-methyl-5'-thioadenosine + phosphate = 5-(methylsulfanyl)-alpha-D-ribose 1-phosphate + adenine. It functions in the pathway amino-acid biosynthesis; L-methionine biosynthesis via salvage pathway; S-methyl-5-thio-alpha-D-ribose 1-phosphate from S-methyl-5'-thioadenosine (phosphorylase route): step 1/1. In terms of biological role, catalyzes the reversible phosphorylation of S-methyl-5'-thioadenosine (MTA) to adenine and 5-methylthioribose-1-phosphate. Involved in the breakdown of MTA, a major by-product of polyamine biosynthesis. Responsible for the first step in the methionine salvage pathway after MTA has been generated from S-adenosylmethionine. Has broad substrate specificity with 6-aminopurine nucleosides as preferred substrates. The protein is S-methyl-5'-thioadenosine phosphorylase of Leptospira interrogans serogroup Icterohaemorrhagiae serovar copenhageni (strain Fiocruz L1-130).